Reading from the N-terminus, the 294-residue chain is 4-diphosphocytidyl-2-C-methyl-D-erythritol kinase (294 aa).

Lys11 is an active-site residue. 96 to 106 provides a ligand contact to ATP; the sequence is PVAAGIGGGSA. Asp138 is a catalytic residue.

It belongs to the GHMP kinase family. IspE subfamily.

The enzyme catalyses 4-CDP-2-C-methyl-D-erythritol + ATP = 4-CDP-2-C-methyl-D-erythritol 2-phosphate + ADP + H(+). It functions in the pathway isoprenoid biosynthesis; isopentenyl diphosphate biosynthesis via DXP pathway; isopentenyl diphosphate from 1-deoxy-D-xylulose 5-phosphate: step 3/6. In terms of biological role, catalyzes the phosphorylation of the position 2 hydroxy group of 4-diphosphocytidyl-2C-methyl-D-erythritol. The polypeptide is 4-diphosphocytidyl-2-C-methyl-D-erythritol kinase (Rhodopseudomonas palustris (strain BisB5)).